The following is a 154-amino-acid chain: MKESPVIKLRELLNLLPHRYPFLLVDKVLSYDLERRSIVAQKNVTINEPFFVGHFPEAPIMPGVLILESLAQAAGVLLGLVLENDRNKRLALFLGIHKAKFRQAVKPGDILTLSAEFSLISSKGGKASARACVGSQVAAEGELSFALVDKKSLD.

His54 is an active-site residue.

It belongs to the thioester dehydratase family. FabZ subfamily.

Its subcellular location is the cytoplasm. It carries out the reaction a (3R)-hydroxyacyl-[ACP] = a (2E)-enoyl-[ACP] + H2O. Its function is as follows. Involved in unsaturated fatty acids biosynthesis. Catalyzes the dehydration of short chain beta-hydroxyacyl-ACPs and long chain saturated and unsaturated beta-hydroxyacyl-ACPs. In Chlamydia abortus (strain DSM 27085 / S26/3) (Chlamydophila abortus), this protein is 3-hydroxyacyl-[acyl-carrier-protein] dehydratase FabZ.